A 702-amino-acid chain; its full sequence is Polyribonucleotide nucleotidyltransferase (702 aa).

The Mg(2+) site is built by D486 and D492. The KH domain maps to 553 to 612 (PSMATIKIDPEKIRDVIGKGGATIRSITEQTGASIDLDDDGTVRIYAADKASSDAALLKI). Positions 622–690 (DKLYKGKVVR…ARGRIKLSMK (69 aa)) constitute an S1 motif domain.

Belongs to the polyribonucleotide nucleotidyltransferase family. In terms of assembly, component of the RNA degradosome, which is a multiprotein complex involved in RNA processing and mRNA degradation. It depends on Mg(2+) as a cofactor.

The protein resides in the cytoplasm. It carries out the reaction RNA(n+1) + phosphate = RNA(n) + a ribonucleoside 5'-diphosphate. Involved in mRNA degradation. Catalyzes the phosphorolysis of single-stranded polyribonucleotides processively in the 3'- to 5'-direction. The sequence is that of Polyribonucleotide nucleotidyltransferase from Marinomonas sp. (strain MWYL1).